Reading from the N-terminus, the 157-residue chain is Crossover junction endodeoxyribonuclease RuvC (157 aa).

Residues Asp-7, Glu-70, and Asp-142 contribute to the active site. Mg(2+) contacts are provided by Asp-7, Glu-70, and Asp-142.

Belongs to the RuvC family. Homodimer which binds Holliday junction (HJ) DNA. The HJ becomes 2-fold symmetrical on binding to RuvC with unstacked arms; it has a different conformation from HJ DNA in complex with RuvA. In the full resolvosome a probable DNA-RuvA(4)-RuvB(12)-RuvC(2) complex forms which resolves the HJ. The cofactor is Mg(2+).

It localises to the cytoplasm. It carries out the reaction Endonucleolytic cleavage at a junction such as a reciprocal single-stranded crossover between two homologous DNA duplexes (Holliday junction).. The RuvA-RuvB-RuvC complex processes Holliday junction (HJ) DNA during genetic recombination and DNA repair. Endonuclease that resolves HJ intermediates. Cleaves cruciform DNA by making single-stranded nicks across the HJ at symmetrical positions within the homologous arms, yielding a 5'-phosphate and a 3'-hydroxyl group; requires a central core of homology in the junction. The consensus cleavage sequence is 5'-(A/T)TT(C/G)-3'. Cleavage occurs on the 3'-side of the TT dinucleotide at the point of strand exchange. HJ branch migration catalyzed by RuvA-RuvB allows RuvC to scan DNA until it finds its consensus sequence, where it cleaves and resolves the cruciform DNA. This is Crossover junction endodeoxyribonuclease RuvC from Synechococcus sp. (strain RCC307).